The chain runs to 149 residues: Oligosaccharyltransferase complex subunit OSTC (149 aa).

Over 1–32 (MESLYRVPFLVLECPNLKLKKPPWVHMPSAMT) the chain is Cytoplasmic. Residues 33 to 53 (VYALVVVSYFLITGGIIYDVI) form a helical membrane-spanning segment. Over 54 to 83 (VEPPSVGSVTDEHGHQRPVAFLAYRVNGQY) the chain is Extracellular. The helical transmembrane segment at 84-104 (IMEGLASSFLFTMGGLGFIIL) threads the bilayer. Residues 105–117 (DRSNAPNIPKLNR) lie on the Cytoplasmic side of the membrane. A helical membrane pass occupies residues 118 to 138 (FLLLFIGFVCVLLSFFMARVF). Residues 139–149 (MRMKLPGYLMG) lie on the Extracellular side of the membrane.

Belongs to the OSTC family. Component of STT3A-containing oligosaccharyl transferase (OST-A) complex. STT3A-containing complex assembly occurs through the formation of 3 subcomplexes. Subcomplex 1 contains RPN1 and TMEM258, subcomplex 2 contains the STT3A-specific subunits STT3A, DC2/OSTC, and KCP2 as well as the core subunit OST4, and subcomplex 3 contains RPN2, DAD1, and OST48. The OST-A complex can form stable complexes with the Sec61 complex or with both the Sec61 and TRAP complexes. Interacts with PSEN1 and NCSTN; indicative for an association with the gamma-secretase complex.

Its subcellular location is the endoplasmic reticulum. The protein resides in the membrane. Its pathway is protein modification; protein glycosylation. In terms of biological role, subunit of STT3A-containing oligosaccharyl transferase (OST-A) complex that catalyzes the initial transfer of a defined glycan (Glc(3)Man(9)GlcNAc(2) in eukaryotes) from the lipid carrier dolichol-pyrophosphate to an asparagine residue within an Asn-X-Ser/Thr consensus motif in nascent polypeptide chains, the first step in protein N-glycosylation. N-glycosylation occurs cotranslationally and the complex associates with the Sec61 complex at the channel-forming translocon complex that mediates protein translocation across the endoplasmic reticulum (ER). Within the OST-A complex, acts as an adapter that anchors the OST-A complex to the Sec61 complex. May be involved in N-glycosylation of APP (amyloid-beta precursor protein). Can modulate gamma-secretase cleavage of APP by enhancing endoprotelysis of PSEN1. The protein is Oligosaccharyltransferase complex subunit OSTC of Bos taurus (Bovine).